Here is a 115-residue protein sequence, read N- to C-terminus: uncharacterized protein (115 aa).

Residues methionine 1–proline 115 form a disordered region. Over residues leucine 7 to serine 17 the composition is skewed to polar residues. 2 stretches are compositionally biased toward low complexity: residues alanine 60–arginine 70 and serine 91–arginine 107.

This is an uncharacterized protein from Human adenovirus C serotype 2 (HAdV-2).